The sequence spans 861 residues: Translation initiation factor IF-2 (861 aa).

The interval A107–Q272 is disordered. Residues R115–E128 show a composition bias toward basic and acidic residues. 2 stretches are compositionally biased toward polar residues: residues S148–T158 and V169–G180. The span at N210–R228 shows a compositional bias: basic and acidic residues. The segment covering R260–K269 has biased composition (basic residues). Residues S362–T531 enclose the tr-type G domain. A G1 region spans residues G371–T378. G371–T378 contacts GTP. The tract at residues G396–H400 is G2. Positions D417 to G420 are G3. GTP is bound by residues D417–H421 and N471–D474. The interval N471–D474 is G4. Residues S507–H509 are G5.

The protein belongs to the TRAFAC class translation factor GTPase superfamily. Classic translation factor GTPase family. IF-2 subfamily.

It localises to the cytoplasm. In terms of biological role, one of the essential components for the initiation of protein synthesis. Protects formylmethionyl-tRNA from spontaneous hydrolysis and promotes its binding to the 30S ribosomal subunits. Also involved in the hydrolysis of GTP during the formation of the 70S ribosomal complex. In Hahella chejuensis (strain KCTC 2396), this protein is Translation initiation factor IF-2.